The primary structure comprises 1047 residues: UPF0182 protein Mlut_14990 (1047 aa).

Composition is skewed to gly residues over residues 1 to 27 and 49 to 59; these read MSFG…GQSG and GPGGPFGGGGS. The interval 1–66 is disordered; sequence MSFGQGGGGP…GGSSAARGRG (66 aa). 7 consecutive transmembrane segments (helical) span residues 71 to 91, 114 to 134, 168 to 188, 214 to 234, 266 to 286, 314 to 334, and 341 to 361; these read PSAL…FVVF, VLAK…AVWL, LVFL…AMNG, FFMA…SVVL, AHIG…FWLN, AILA…VVSG, and IGTA…PFIV. Disordered regions lie at residues 544–568, 941–965, and 1007–1047; these read GAPA…TFSG, GDSG…PTAP, and EALK…TPSG. The span at 555–565 shows a compositional bias: polar residues; sequence TADSQEDTAYT. Low complexity predominate over residues 1015–1037; the sequence is ADDALGGDAPAQEQAPAEASPAP. Pro residues predominate over residues 1038-1047; that stretch reads SSSPSPTPSG.

The protein belongs to the UPF0182 family.

The protein resides in the cell membrane. This Micrococcus luteus (strain ATCC 4698 / DSM 20030 / JCM 1464 / CCM 169 / CCUG 5858 / IAM 1056 / NBRC 3333 / NCIMB 9278 / NCTC 2665 / VKM Ac-2230) (Micrococcus lysodeikticus) protein is UPF0182 protein Mlut_14990.